The following is a 1158-amino-acid chain: cGMP-specific 3',5'-cyclic phosphodiesterase (1158 aa).

Disordered regions lie at residues 1 to 137 (MTDV…SQHD) and 195 to 216 (SPTVQQKSPRSLSNSSASSIPE). Over residues 30–71 (ATTSAAASASSSQAKPLTNGAKKAATAAAAAGAEEGGASASN) the composition is skewed to low complexity. The span at 108–135 (GSTSKSSSIHTQTSQQERAGRPTSSASQ) shows a compositional bias: polar residues. Low complexity predominate over residues 202-215 (SPRSLSNSSASSIP). 2 consecutive GAF domains span residues 242-394 (DIDV…GIGI) and 426-640 (NLEC…GLGI). The region spanning 670 to 993 (SQDQTEKLTQ…RNWQDLAEKV (324 aa)) is the PDEase domain. H746 serves as the catalytic Proton donor. A divalent metal cation contacts are provided by H750, H786, D787, and D897. Disordered stretches follow at residues 1034–1065 (QSQQSQHGSEDSHTPEHQRSGSRLSMKKTGAL) and 1097–1158 (VSED…CALL). A compositionally biased stretch (basic and acidic residues) spans 1041-1052 (GSEDSHTPEHQR). Residues 1114–1130 (AAGSMGRMSASSSTSSA) are compositionally biased toward low complexity. Over residues 1148 to 1158 (SKKRSKLCALL) the composition is skewed to basic residues. C1155 carries the post-translational modification Cysteine methyl ester. A lipid anchor (S-farnesyl cysteine) is attached at C1155. A propeptide spans 1156 to 1158 (ALL) (removed in mature form).

Belongs to the cyclic nucleotide phosphodiesterase family. Interacts with PrBP. A divalent metal cation serves as cofactor.

It is found in the cell membrane. The enzyme catalyses 3',5'-cyclic GMP + H2O = GMP + H(+). Its function is as follows. Has a role regulating cGMP transport in Malpighian tubule principal cells. The protein is cGMP-specific 3',5'-cyclic phosphodiesterase of Drosophila ananassae (Fruit fly).